The following is a 2075-amino-acid chain: Autophagy-related protein 2 homolog B (2075 aa).

Residues Ala-13 to Arg-107 enclose the Chorein N-terminal domain. Residues Ser-255, Ser-379, Ser-496, Ser-839, Ser-885, Ser-898, and Ser-1007 each carry the phosphoserine modification. Tyr-1011 bears the Phosphotyrosine mark. Ser-1015 and Ser-1017 each carry phosphoserine. Thr-1021 carries the post-translational modification Phosphothreonine. Residues Lys-1373–Ala-1403 form a disordered region. The residue at position 1525 (Ser-1525) is a Phosphoserine. Disordered regions lie at residues Thr-1570 to Thr-1593, Glu-1759 to Ser-1792, and Arg-2055 to Asp-2075. The span at Pro-1578–Thr-1587 shows a compositional bias: polar residues. Residues Ile-2058 to Asp-2075 are compositionally biased toward basic and acidic residues.

It belongs to the ATG2 family. As to quaternary structure, interacts with WDR45/WIPI4.

It is found in the preautophagosomal structure membrane. The protein localises to the lipid droplet. The protein resides in the endoplasmic reticulum membrane. The catalysed reaction is a 1,2-diacyl-sn-glycero-3-phospho-L-serine(in) = a 1,2-diacyl-sn-glycero-3-phospho-L-serine(out). It catalyses the reaction a 1,2-diacyl-sn-glycero-3-phosphoethanolamine(in) = a 1,2-diacyl-sn-glycero-3-phosphoethanolamine(out). Functionally, lipid transfer protein required for both autophagosome formation and regulation of lipid droplet morphology and dispersion. Tethers the edge of the isolation membrane (IM) to the endoplasmic reticulum (ER) and mediates direct lipid transfer from ER to IM for IM expansion. Binds to the ER exit site (ERES), which is the membrane source for autophagosome formation, and extracts phospholipids from the membrane source and transfers them to ATG9 (ATG9A or ATG9B) to the IM for membrane expansion. Lipid transfer activity is enhanced by WDR45/WIPI4, which promotes ATG2B-association with phosphatidylinositol 3-monophosphate (PI3P)-containing membranes. The polypeptide is Autophagy-related protein 2 homolog B (Mus musculus (Mouse)).